We begin with the raw amino-acid sequence, 379 residues long: Nematocin receptor 1 (379 aa).

Residues 19–48 (HNLYLFQMLELQENITDSQPMDPPSLEIMM) lie on the Extracellular side of the membrane. An N-linked (GlcNAc...) asparagine glycan is attached at asparagine 32. A helical transmembrane segment spans residues 49 to 69 (LHHLMIILVTLFGNTLLIYVI). The Cytoplasmic portion of the chain corresponds to 70-95 (YKNNAVLRRKRVTPVQMLMLHMCAAD). The helical transmembrane segment at 96–116 (ILFALISVGPTMAITATVPFF) threads the bilayer. Residues 117-124 (YGPNLLCK) lie on the Extracellular side of the membrane. Cysteine 123 and cysteine 196 are joined by a disulfide. Residues 125–145 (LTKFLQVIPMYASSFLLVAIS) form a helical membrane-spanning segment. Residues 146 to 168 (ADRYQAICRPLASMKSSIYNRPA) are Cytoplasmic-facing. The chain crosses the membrane as a helical span at residues 169-189 (LYSGIAWTAAILFSTPQLYLF). The Extracellular portion of the chain corresponds to 190 to 207 (EKRNGDCSENYTTALQYQ). Residue asparagine 199 is glycosylated (N-linked (GlcNAc...) asparagine). The helical transmembrane segment at 208-228 (LYVCLFNSVVWLLPSAIAGWL) threads the bilayer. Residues 229–289 (YLCVCKAVWK…DRRRVQTVKL (61 aa)) lie on the Cytoplasmic side of the membrane. Residues 290–310 (TLTIVAANFVLWAPFCITSVI) form a helical membrane-spanning segment. The Extracellular segment spans residues 311–320 (DAVWPTAINS). Residue asparagine 319 is glycosylated (N-linked (GlcNAc...) asparagine). The helical transmembrane segment at 321-343 (TFATYIMFFGNLNSCMNPWLWFH) threads the bilayer. Over 344 to 379 (FNRKQLKRACPCRKSSEPLIQSLVYVHVMTSEQSDF) the chain is Cytoplasmic.

Belongs to the G-protein coupled receptor 1 family. Vasopressin/oxytocin receptor subfamily. As to expression, detected in the left ASE gustatory neuron, the chemosensory neuron pairs ASH and ADF, and the PQR tail neuron. In males, detected in hook and tail sensory neurons involved in vulval sensing and hermaphrodite contact, and in spicule protractor muscles.

It localises to the cell membrane. Its function is as follows. Receptor for nematocin. The activity of this receptor is mediated by G proteins which activate a phosphatidylinositol-calcium second messenger system. The activity of this receptor may be modulated by ntr-2, leading to reduced intracellular cAMP production. Plays a role in gustatory associative learning. Also plays a role in male mating behavior. This is Nematocin receptor 1 from Caenorhabditis elegans.